The sequence spans 174 residues: Actin-related protein 2/3 complex subunit 3 (174 aa).

The protein belongs to the ARPC3 family. In terms of assembly, component of the Arp2/3 complex composed of arpB/Arp2, arpC/Arp3, arcA/p41-arc, arcB/p34-arc, arcC/p21-arc, arcD/p20-arc and arcE/p16-arc. Interacts with carmil (via the region between the LRR domain and COOH-terminal proline-rich domain); carmil is required for Arp2/3-dependent actin nucleation. Arp2/3 complex, MyoB, MyoC, and the alpha and beta subunits of capping protein all form a larger complex with carmil.

It is found in the cytoplasm. The protein resides in the cytoskeleton. The protein localises to the cytosol. It localises to the cell cortex. Its subcellular location is the cell projection. It is found in the pseudopodium. In terms of biological role, functions as a component of the Arp2/3 complex which is involved in regulation of actin polymerization and together with an activating nucleation-promoting factor (NPF) mediates the formation of branched actin networks. Seems to contact the pointed end of the daughter actin filament. The Arp2/3 complex is involved in organizing the actin system in cell motility and chemotaxis, in phagocytosis and macropinocytosis, at late steps of endosome processing, and in mitosis. In concert with a group of other proteins, the Arp2/3 complex plays a general role in the rapid activation and adaptation of the actin system to its multiple functions. This is Actin-related protein 2/3 complex subunit 3 (arcC) from Dictyostelium discoideum (Social amoeba).